A 400-amino-acid polypeptide reads, in one-letter code: Mu-type opioid receptor (400 aa).

Topologically, residues 1-68 (MDSSAAPTNA…CPPTGSPSMI (68 aa)) are extracellular. Residues asparagine 9, asparagine 12, asparagine 33, asparagine 40, and asparagine 48 are each glycosylated (N-linked (GlcNAc...) asparagine). Residues 69 to 93 (TAITIMALYSIVCVVGLFGNFLVMY) form a helical membrane-spanning segment. Topologically, residues 94–106 (VIVRYTKMKTATN) are cytoplasmic. The chain crosses the membrane as a helical span at residues 107–131 (IYIFNLALADALATSTLPFQSVNYL). The Extracellular portion of the chain corresponds to 132–142 (MGTWPFGTILC). Cysteine 142 and cysteine 219 are oxidised to a cystine. A helical transmembrane segment spans residues 143–165 (KIVISIDYYNMFTSIFTLCTMSV). Residues 166–185 (DRYIAVCHPVKALDFRTPRN) are Cytoplasmic-facing. Tyrosine 168 carries the phosphotyrosine modification. The chain crosses the membrane as a helical span at residues 186–207 (AKIINVCNWILSSAIGLPVMFM). Residues 208 to 230 (ATTKYRQGSIDCTLTFSHPTWYW) are Extracellular-facing. The helical transmembrane segment at 231–255 (ENLLKICVFIFAFIMPVLIITVCYG) threads the bilayer. Over 256–279 (LMILRLKSVRMLSGSKEKDRNLRR) the chain is Cytoplasmic. Residues 280-306 (ITRMVLVVVAVFIVCWTPIHIYVIIKA) traverse the membrane as a helical segment. Topologically, residues 307–314 (LVTIPETT) are extracellular. Residues 315–338 (FQTVSWHFCIALGYTNSCLNPVLY) form a helical membrane-spanning segment. The NPxxY; plays a role in stabilizing the activated conformation of the receptor signature appears at 334 to 338 (NPVLY). Residues 339–400 (AFLDENFKRC…NLEAETAPLP (62 aa)) are Cytoplasmic-facing. A lipid anchor (S-palmitoyl cysteine) is attached at cysteine 353. Serine 365 carries the post-translational modification Phosphoserine. A Phosphothreonine modification is found at threonine 372. Serine 377 bears the Phosphoserine mark. Threonine 396 is subject to Phosphothreonine.

The protein belongs to the G-protein coupled receptor 1 family. As to quaternary structure, forms homooligomers and heterooligomers with other GPCRs, such as OPRD1, OPRK1, OPRL1, NPFFR2, ADRA2A, SSTR2, CNR1 and CCR5 (probably in dimeric forms). Interacts with heterotrimeric G proteins; interaction with a heterotrimeric complex containing GNAI1, GNB1 and GNG2 stabilizes the active conformation of the receptor and increases its affinity for endomorphin-2, the synthetic opioid peptide DAMGO and for morphinan agonists. Interacts with PPL; the interaction disrupts agonist-mediated G-protein activation. Interacts (via C-terminus) with DNAJB4 (via C-terminus). Interacts with calmodulin; the interaction inhibits the constitutive activity of OPRM1; it abolishes basal and attenuates agonist-stimulated G-protein coupling. Interacts with FLNA, PLD2, RANBP9 and WLS and GPM6A. Interacts with RTP4. Interacts with SYP and GNAS. Interacts with RGS9, RGS17, RGS20, RGS4, PPP1R9B and HINT1. In terms of processing, phosphorylated. Differentially phosphorylated in basal and agonist-induced conditions. Agonist-mediated phosphorylation modulates receptor internalization. Phosphorylated by GRK2 in a agonist-dependent manner. Phosphorylation at Tyr-168 requires receptor activation, is dependent on non-receptor protein tyrosine kinase Src and results in a decrease in agonist efficacy by reducing G-protein coupling efficiency. Phosphorylated on tyrosine residues; the phosphorylation is involved in agonist-induced G-protein-independent receptor down-regulation. Phosphorylation at Ser-377 is involved in G-protein-dependent but not beta-arrestin-dependent activation of the ERK pathway. Post-translationally, ubiquitinated. A basal ubiquitination seems not to be related to degradation. Ubiquitination is increased upon formation of OPRM1:OPRD1 oligomers leading to proteasomal degradation; the ubiquitination is diminished by RTP4. As to expression, expressed in brain. Isoform 16 and isoform 17 are detected in brain.

The protein localises to the cell membrane. It localises to the cell projection. Its subcellular location is the axon. The protein resides in the perikaryon. It is found in the dendrite. The protein localises to the endosome. It localises to the cytoplasm. In terms of biological role, receptor for endogenous opioids such as beta-endorphin and endomorphin. Receptor for natural and synthetic opioids including morphine, heroin, DAMGO, fentanyl, etorphine, buprenorphin and methadone. Also activated by enkephalin peptides, such as Met-enkephalin or Met-enkephalin-Arg-Phe, with higher affinity for Met-enkephalin-Arg-Phe. Agonist binding to the receptor induces coupling to an inactive GDP-bound heterotrimeric G-protein complex and subsequent exchange of GDP for GTP in the G-protein alpha subunit leading to dissociation of the G-protein complex with the free GTP-bound G-protein alpha and the G-protein beta-gamma dimer activating downstream cellular effectors. The agonist- and cell type-specific activity is predominantly coupled to pertussis toxin-sensitive G(i) and G(o) G alpha proteins, GNAI1, GNAI2, GNAI3 and GNAO1 isoforms Alpha-1 and Alpha-2, and to a lesser extent to pertussis toxin-insensitive G alpha proteins GNAZ and GNA15. They mediate an array of downstream cellular responses, including inhibition of adenylate cyclase activity and both N-type and L-type calcium channels, activation of inward rectifying potassium channels, mitogen-activated protein kinase (MAPK), phospholipase C (PLC), phosphoinositide/protein kinase (PKC), phosphoinositide 3-kinase (PI3K) and regulation of NF-kappa-B. Also couples to adenylate cyclase stimulatory G alpha proteins. The selective temporal coupling to G-proteins and subsequent signaling can be regulated by RGSZ proteins, such as RGS9, RGS17 and RGS4. Phosphorylation by members of the GPRK subfamily of Ser/Thr protein kinases and association with beta-arrestins is involved in short-term receptor desensitization. Beta-arrestins associate with the GPRK-phosphorylated receptor and uncouple it from the G-protein thus terminating signal transduction. The phosphorylated receptor is internalized through endocytosis via clathrin-coated pits which involves beta-arrestins. The activation of the ERK pathway occurs either in a G-protein-dependent or a beta-arrestin-dependent manner and is regulated by agonist-specific receptor phosphorylation. Acts as a class A G-protein coupled receptor (GPCR) which dissociates from beta-arrestin at or near the plasma membrane and undergoes rapid recycling. Receptor down-regulation pathways are varying with the agonist and occur dependent or independent of G-protein coupling. Endogenous ligands induce rapid desensitization, endocytosis and recycling. Heterooligomerization with other GPCRs can modulate agonist binding, signaling and trafficking properties. Its function is as follows. Couples to GNAS and is proposed to be involved in excitatory effects. Functionally, does not bind agonists but may act through oligomerization with binding-competent OPRM1 isoforms and reduce their ligand binding activity. The protein is Mu-type opioid receptor (OPRM1) of Homo sapiens (Human).